Consider the following 356-residue polypeptide: UDP-N-acetylglucosamine--N-acetylmuramyl-(pentapeptide) pyrophosphoryl-undecaprenol N-acetylglucosamine transferase (356 aa).

Residues 12–14, N120, R163, S187, and Q286 each bind UDP-N-acetyl-alpha-D-glucosamine; that span reads SGG.

The protein belongs to the glycosyltransferase 28 family. MurG subfamily.

The protein localises to the cell inner membrane. The enzyme catalyses di-trans,octa-cis-undecaprenyl diphospho-N-acetyl-alpha-D-muramoyl-L-alanyl-D-glutamyl-meso-2,6-diaminopimeloyl-D-alanyl-D-alanine + UDP-N-acetyl-alpha-D-glucosamine = di-trans,octa-cis-undecaprenyl diphospho-[N-acetyl-alpha-D-glucosaminyl-(1-&gt;4)]-N-acetyl-alpha-D-muramoyl-L-alanyl-D-glutamyl-meso-2,6-diaminopimeloyl-D-alanyl-D-alanine + UDP + H(+). It participates in cell wall biogenesis; peptidoglycan biosynthesis. In terms of biological role, cell wall formation. Catalyzes the transfer of a GlcNAc subunit on undecaprenyl-pyrophosphoryl-MurNAc-pentapeptide (lipid intermediate I) to form undecaprenyl-pyrophosphoryl-MurNAc-(pentapeptide)GlcNAc (lipid intermediate II). This is UDP-N-acetylglucosamine--N-acetylmuramyl-(pentapeptide) pyrophosphoryl-undecaprenol N-acetylglucosamine transferase from Pelagibacter ubique (strain HTCC1062).